A 240-amino-acid polypeptide reads, in one-letter code: MCTLFIADLHLSEHEPAITAGFLRFLREDAIQADSLYILGDLFDYWIGDDDNNPLHREIASALKTVQQQGVSCYFIHGNRDFLLGSRFAKESGIILLPQEKVLELYGKRVLILHGDTLCTDDEGYQRYRKRVHTPWIQRLFLLLPLSIRQKIAVKMRANSQSVNRRKSEAIMDVNQQAVIDTFERYQADWMIHGHTHRPFVHEVPLHDKTVYRGVLGAWHHQGSMFKITDKSIDLISFPF.

Residues Asp-8, His-10, Asp-41, Asn-79, and His-114 each contribute to the Mn(2+) site. Position 79 to 80 (79 to 80 (NR)) interacts with substrate. Substrate-binding residues include Asp-122, Ser-160, Asn-164, Lys-167, and His-195. Mn(2+) contacts are provided by His-195 and His-197.

This sequence belongs to the LpxH family. It depends on Mn(2+) as a cofactor.

The protein localises to the cell inner membrane. It catalyses the reaction UDP-2-N,3-O-bis[(3R)-3-hydroxytetradecanoyl]-alpha-D-glucosamine + H2O = 2-N,3-O-bis[(3R)-3-hydroxytetradecanoyl]-alpha-D-glucosaminyl 1-phosphate + UMP + 2 H(+). Its pathway is glycolipid biosynthesis; lipid IV(A) biosynthesis; lipid IV(A) from (3R)-3-hydroxytetradecanoyl-[acyl-carrier-protein] and UDP-N-acetyl-alpha-D-glucosamine: step 4/6. Functionally, hydrolyzes the pyrophosphate bond of UDP-2,3-diacylglucosamine to yield 2,3-diacylglucosamine 1-phosphate (lipid X) and UMP by catalyzing the attack of water at the alpha-P atom. Involved in the biosynthesis of lipid A, a phosphorylated glycolipid that anchors the lipopolysaccharide to the outer membrane of the cell. The polypeptide is UDP-2,3-diacylglucosamine hydrolase (Photorhabdus laumondii subsp. laumondii (strain DSM 15139 / CIP 105565 / TT01) (Photorhabdus luminescens subsp. laumondii)).